The sequence spans 547 residues: Probable high-affinity hexose transporter ght8, mitochondrial (547 aa).

The transit peptide at 1 to 21 (MGKTLTIVMLVFVSMAGWMFG) directs the protein to the mitochondrion. At 22–86 (ADTGSIGGIT…SPLMDRIGKR (65 aa)) the chain is on the mitochondrial intermembrane side. Residues 87–107 (VSIMFWTIVYLIGIILQVTAV) traverse the membrane as a helical segment. Over 108-112 (PSWVQ) the chain is Cytoplasmic. The chain crosses the membrane as a helical span at residues 113-133 (IMVAKIWTGLAIGALSVLAPG). Residues 134 to 144 (FQSEVAPATLR) are Mitochondrial intermembrane-facing. Residues 145 to 165 (GTIVTTYQLAVTGGIFIAACI) traverse the membrane as a helical segment. The Cytoplasmic portion of the chain corresponds to 166-179 (NMGTHKLHKTAQWR). The helical transmembrane segment at 180–200 (VSMGINLLWGIIMFIGISFLP) threads the bilayer. The Mitochondrial intermembrane segment spans residues 201–304 (ESPRYLIAIG…TGMNSPYLSA (104 aa)). A helical membrane pass occupies residues 305–325 (LILDAVNFGCTFGGLFVLEFF). Over 326–328 (GRR) the chain is Cytoplasmic. The helical transmembrane segment at 329–349 (MPLIIGGVWQSITFFIYAAVG) threads the bilayer. Over 350–363 (NRALTRKNGTSNHR) the chain is Mitochondrial intermembrane. The chain crosses the membrane as a helical span at residues 364-384 (AGAVMIVFSCLFIFSFAQTWG). At 385–404 (PAAYVIVGESYPIRYRSKCA) the chain is on the cytoplasmic side. A helical membrane pass occupies residues 405–425 (AVATTGNWLWGFLITFFTPFI). Residues 426–432 (SDSIGFK) are Mitochondrial intermembrane-facing. Residues 433–453 (YGYIFAACNLCAACIIFLFAH) traverse the membrane as a helical segment. Residues 454–547 (ETKGLTLEEI…NYVDEQDRYA (94 aa)) lie on the Cytoplasmic side of the membrane. The disordered stretch occupies residues 482–547 (GQAAKQQQEV…NYVDEQDRYA (66 aa)). Residues 517–529 (TSSNDITSSTSSS) show a composition bias toward low complexity. Ser519 bears the Phosphoserine mark. A phosphothreonine mark is found at Thr523 and Thr526. Residues Ser527, Ser528, Ser529, and Ser537 each carry the phosphoserine modification.

The protein belongs to the major facilitator superfamily. Sugar transporter (TC 2.A.1.1) family.

It localises to the mitochondrion membrane. The sequence is that of Probable high-affinity hexose transporter ght8, mitochondrial (ght8) from Schizosaccharomyces pombe (strain 972 / ATCC 24843) (Fission yeast).